A 121-amino-acid chain; its full sequence is MARIAGIDIPREKRVEIALTYVYGIGLTRSKLILANTGVNPDTRVKDLSDGDVQKLRGATEEFTLEGDLRRKEGMALKRLQDIGCVRGRRHRMSLPVRGQRTRTNARTRRGSRKTVAGRKK.

The disordered stretch occupies residues 91 to 121 (HRMSLPVRGQRTRTNARTRRGSRKTVAGRKK). The span at 100-121 (QRTRTNARTRRGSRKTVAGRKK) shows a compositional bias: basic residues.

The protein belongs to the universal ribosomal protein uS13 family. Part of the 30S ribosomal subunit. Forms a loose heterodimer with protein S19. Forms two bridges to the 50S subunit in the 70S ribosome.

In terms of biological role, located at the top of the head of the 30S subunit, it contacts several helices of the 16S rRNA. In the 70S ribosome it contacts the 23S rRNA (bridge B1a) and protein L5 of the 50S subunit (bridge B1b), connecting the 2 subunits; these bridges are implicated in subunit movement. Contacts the tRNAs in the A and P-sites. This chain is Small ribosomal subunit protein uS13, found in Prochlorococcus marinus (strain AS9601).